The primary structure comprises 1034 residues: MERARRLAILGRLVSQTKHNPSISSPALCSPSRYVSSLSPYVCSGTNVRSDRNLNGFGSQVRTISVEALKPSDTFPRRHNSATPEEQTKMAEFVGFPNLDSLIDATVPKSIRLDSMKYSKFDEGLTESQMIAHMQDLASKNKIFKSFIGMGYYNTSVPTVILRNIMENPGWYTQYTPYQAEIAQGRLESLLNFQTMITDLTGLPMSNASLLDEGTAAAEAMAMCNNIQKGKKKTFIIASNCHPQTIDICKTRADGFDLKVVTSDLKDFDYSSGDVCGVLVQYPGTEGELLDYSEFIKNAHANGVKVVMASDLLALTILKPPGELGADIVVGSAQRFGVPMGYGGPHAAFLATSQEYKRMMPGRIIGVSVDSSGKPALRMAMQTREQHIRRDKATSNICTAQALLANMAAMFGVYHGPEGLKTIAKRVHGLAGTFASGLKKLGTVQVQDLPFFDTVKVTCADSKAIAEEAYKHKMNLRIVDKNTITVAFDETTTIEDVDTLFKVFALGKPVTFTAASIAPEVQDAIPSGLVRETPYLTHPIFNMYHTEHELLRYISKLQSKDLSLCHSMIPLGSCTMKLNATTEMMPVTWPAFADIHPFAPTEQAQGYQEMFKNLGDLLCTITGFDSFSLQPNAGAAGEYAGLMVIRAYHMARGDHHRNVCIIPVSAHGTNPASAAMCGMKIITVGTDSKGNINIEELRKAAEANKENLSALMVTYPSTHGVYEEGIDEICKIIHDNGGQVYMDGANMNAQVGLTSPGWIGADVCHLNLHKTFCIPHGGGGPGMGPIGVKKHLAPYLPSHPVVPTGGIPAPEQSQPLGTIAAAPWGSALILPISYTYIAMMGSQGITNASKIAILNANYMAKRLENHYPILFRGVNGTVAHEFIVDLRPLKTTAGIEPEDVAKRLIDYGFHGPTMSWPVPGTLMIEPTESESKAELDRFCDALISIRQEIAEIEKGNVDFNNNVIKGAPHPPQLLMADKWTKPYSREYAAYPAPWLRAAKFWPTTCRVDNVYGDRNLICTLQPPQEYEEKAEATA.

Residues 1–63 (MERARRLAIL…LNGFGSQVRT (63 aa)) constitute a mitochondrion transit peptide. Lys770 carries the post-translational modification N6-(pyridoxal phosphate)lysine.

The protein belongs to the GcvP family. Homodimer. The glycine cleavage system is composed of four proteins: P, T, L and H. Pyridoxal 5'-phosphate is required as a cofactor.

Its subcellular location is the mitochondrion. The enzyme catalyses N(6)-[(R)-lipoyl]-L-lysyl-[glycine-cleavage complex H protein] + glycine + H(+) = N(6)-[(R)-S(8)-aminomethyldihydrolipoyl]-L-lysyl-[glycine-cleavage complex H protein] + CO2. The glycine cleavage system catalyzes the degradation of glycine. The P protein binds the alpha-amino group of glycine through its pyridoxal phosphate cofactor; CO(2) is released and the remaining methylamine moiety is then transferred to the lipoamide cofactor of the H protein. This is Glycine dehydrogenase (decarboxylating) B, mitochondrial (GDCSPB) from Flaveria pringlei.